The sequence spans 195 residues: ATP-dependent Clp protease proteolytic subunit 3 (195 aa).

Ser-97 serves as the catalytic Nucleophile. The active site involves His-122.

It belongs to the peptidase S14 family. Fourteen ClpP subunits assemble into 2 heptameric rings which stack back to back to give a disk-like structure with a central cavity, resembling the structure of eukaryotic proteasomes.

The protein resides in the cytoplasm. It carries out the reaction Hydrolysis of proteins to small peptides in the presence of ATP and magnesium. alpha-casein is the usual test substrate. In the absence of ATP, only oligopeptides shorter than five residues are hydrolyzed (such as succinyl-Leu-Tyr-|-NHMec, and Leu-Tyr-Leu-|-Tyr-Trp, in which cleavage of the -Tyr-|-Leu- and -Tyr-|-Trp bonds also occurs).. Cleaves peptides in various proteins in a process that requires ATP hydrolysis. Has a chymotrypsin-like activity. Plays a major role in the degradation of misfolded proteins. The chain is ATP-dependent Clp protease proteolytic subunit 3 from Rhizobium meliloti (strain 1021) (Ensifer meliloti).